The primary structure comprises 456 residues: Protein king tubby (456 aa).

The interval 111–202 (HELEDEESSP…SNGAGGESEG (92 aa)) is disordered. Residues 120–152 (PVTVIEQQQTAPHSANSTHSQRPSTTRQPSFND) are compositionally biased toward polar residues. S149 is subject to Phosphoserine.

This sequence belongs to the TUB family.

The protein localises to the cytoplasm. Its subcellular location is the nucleus. It localises to the cell projection. It is found in the cilium membrane. The protein resides in the rhabdomere. The sequence is that of Protein king tubby from Drosophila pseudoobscura pseudoobscura (Fruit fly).